The sequence spans 977 residues: Glycine dehydrogenase (decarboxylating) (977 aa).

Lys702 carries the post-translational modification N6-(pyridoxal phosphate)lysine.

It belongs to the GcvP family. In terms of assembly, the glycine cleavage system is composed of four proteins: P, T, L and H. Pyridoxal 5'-phosphate serves as cofactor.

The enzyme catalyses N(6)-[(R)-lipoyl]-L-lysyl-[glycine-cleavage complex H protein] + glycine + H(+) = N(6)-[(R)-S(8)-aminomethyldihydrolipoyl]-L-lysyl-[glycine-cleavage complex H protein] + CO2. The glycine cleavage system catalyzes the degradation of glycine. The P protein binds the alpha-amino group of glycine through its pyridoxal phosphate cofactor; CO(2) is released and the remaining methylamine moiety is then transferred to the lipoamide cofactor of the H protein. This chain is Glycine dehydrogenase (decarboxylating), found in Xanthomonas axonopodis pv. citri (strain 306).